Consider the following 379-residue polypeptide: Homoserine O-succinyltransferase (379 aa).

The region spanning 51 to 360 is the AB hydrolase-1 domain; it reads NAVLICHALS…DAPQGHDAFL (310 aa). The Nucleophile role is filled by Ser-157. Arg-227 serves as a coordination point for substrate. Active-site residues include Asp-323 and His-356. Asp-357 serves as a coordination point for substrate.

Belongs to the AB hydrolase superfamily. MetX family. In terms of assembly, homodimer.

Its subcellular location is the cytoplasm. It catalyses the reaction L-homoserine + succinyl-CoA = O-succinyl-L-homoserine + CoA. It participates in amino-acid biosynthesis; L-methionine biosynthesis via de novo pathway; O-succinyl-L-homoserine from L-homoserine: step 1/1. Its function is as follows. Transfers a succinyl group from succinyl-CoA to L-homoserine, forming succinyl-L-homoserine. This Pseudomonas fluorescens (strain SBW25) protein is Homoserine O-succinyltransferase.